The chain runs to 470 residues: Neuraminidase (470 aa).

Topologically, residues 1 to 14 are intravirion; sequence MNPNQKIITIGSIS. The segment at 11 to 32 is involved in apical transport and lipid raft association; that stretch reads GSISLGLVVFNVLLHVVSIIVT. The helical transmembrane segment at 15–35 threads the bilayer; that stretch reads LGLVVFNVLLHVVSIIVTVLV. The interval 32 to 86 is hypervariable stalk region; sequence TVLVLGRGGKNRICNETVVREYNETVRIEKVTQWHNTNVIEYVPYWNEGTYMNNT. Topologically, residues 36-470 are virion surface; that stretch reads LGRGGKNRIC…AILPFDIDKM (435 aa). Asn46, Asn54, and Asn84 each carry an N-linked (GlcNAc...) asparagine; by host glycan. Residues 89 to 470 are head of neuraminidase; it reads ICDVKGFAPF…AILPFDIDKM (382 aa). 8 cysteine pairs are disulfide-bonded: Cys90-Cys417, Cys122-Cys127, Cys182-Cys229, Cys231-Cys236, Cys277-Cys290, Cys279-Cys288, Cys316-Cys335, and Cys421-Cys446. Arg116 is a substrate binding site. A glycan (N-linked (GlcNAc...) asparagine; by host) is linked at Asn144. Asp149 functions as the Proton donor/acceptor in the catalytic mechanism. Arg150 serves as a coordination point for substrate. 275–276 provides a ligand contact to substrate; that stretch reads EE. A substrate-binding site is contributed by Arg291. Residue Asp292 participates in Ca(2+) binding. An N-linked (GlcNAc...) asparagine; by host glycan is attached at Asn293. Gly296 and Asp322 together coordinate Ca(2+). Arg368 contacts substrate. A glycan (N-linked (GlcNAc...) asparagine; by host) is linked at Asn398. The Nucleophile role is filled by Tyr402.

This sequence belongs to the glycosyl hydrolase 34 family. Homotetramer. The cofactor is Ca(2+). Post-translationally, N-glycosylated.

Its subcellular location is the virion membrane. It localises to the host apical cell membrane. It carries out the reaction Hydrolysis of alpha-(2-&gt;3)-, alpha-(2-&gt;6)-, alpha-(2-&gt;8)- glycosidic linkages of terminal sialic acid residues in oligosaccharides, glycoproteins, glycolipids, colominic acid and synthetic substrates.. Its activity is regulated as follows. Inhibited by the neuraminidase inhibitors zanamivir (Relenza) and oseltamivir (Tamiflu). These drugs interfere with the release of progeny virus from infected cells and are effective against all influenza strains. Resistance to neuraminidase inhibitors is quite rare. In terms of biological role, catalyzes the removal of terminal sialic acid residues from viral and cellular glycoconjugates. Cleaves off the terminal sialic acids on the glycosylated HA during virus budding to facilitate virus release. Additionally helps virus spread through the circulation by further removing sialic acids from the cell surface. These cleavages prevent self-aggregation and ensure the efficient spread of the progeny virus from cell to cell. Otherwise, infection would be limited to one round of replication. Described as a receptor-destroying enzyme because it cleaves a terminal sialic acid from the cellular receptors. May facilitate viral invasion of the upper airways by cleaving the sialic acid moieties on the mucin of the airway epithelial cells. Likely to plays a role in the budding process through its association with lipid rafts during intracellular transport. May additionally display a raft-association independent effect on budding. Plays a role in the determination of host range restriction on replication and virulence. Sialidase activity in late endosome/lysosome traffic seems to enhance virus replication. The polypeptide is Neuraminidase (Influenza A virus (strain A/Equine/Jillin/1/1989 H3N8)).